The following is a 1386-amino-acid chain: Lysophospholipase NTE1 (1386 aa).

Residues methionine 1–threonine 19 are Cytoplasmic-facing. A helical membrane pass occupies residues threonine 20–phenylalanine 40. Over lysine 41–asparagine 65 the chain is Lumenal. The chain crosses the membrane as a helical span at residues leucine 66–isoleucine 86. The Cytoplasmic segment spans residues arginine 87–isoleucine 1386. Positions glutamate 394–threonine 416 are disordered. A compositionally biased stretch (basic residues) spans lysine 402–glutamine 411. Residues lysine 577–leucine 701 and lysine 697–lysine 821 contribute to the a nucleoside 3',5'-cyclic phosphate site. The 165-residue stretch at leucine 1081 to lysine 1245 folds into the PNPLA domain. The short motif at glycine 1085–glycine 1090 is the GXGXXG element. Positions glycine 1112–glycine 1116 match the GXSXG motif. Catalysis depends on serine 1114, which acts as the Nucleophile. The Proton acceptor role is filled by aspartate 1232. Residues aspartate 1232–glycine 1234 carry the DGA/G motif.

The protein belongs to the NTE family.

The protein localises to the endoplasmic reticulum membrane. It catalyses the reaction a 1-acyl-sn-glycero-3-phosphocholine + H2O = sn-glycerol 3-phosphocholine + a fatty acid + H(+). Inhibited by organophosphorus esters. In terms of biological role, intracellular phospholipase B that catalyzes the double deacylation of phosphatidylcholine (PC) to glycerophosphocholine (GroPCho). Plays an important role in membrane lipid homeostasis. Responsible for the rapid PC turnover in response to inositol, elevated temperatures, or when choline is present in the growth medium. This chain is Lysophospholipase NTE1 (NTE1), found in Candida albicans (strain SC5314 / ATCC MYA-2876) (Yeast).